The primary structure comprises 756 residues: Sodium/hydrogen exchanger 8 (756 aa).

The Extracellular portion of the chain corresponds to 1–31; sequence MTSIIGAALPYKSPEKAIASSSYSAENDSSP. Asn27 is a glycosylation site (N-linked (GlcNAc...) asparagine). A helical membrane pass occupies residues 32-52; sequence VDAVIFAGTSLVLGTACRYLF. Residues 53 to 56 are Cytoplasmic-facing; the sequence is NGTR. A helical transmembrane segment spans residues 57–77; the sequence is VPYTVVLLVIGIFLGSLEYGT. Residues 78–89 are Extracellular-facing; the sequence is KHNLGKLGHGIR. A helical transmembrane segment spans residues 90–110; it reads IWNGINPDLLLAVFLPVLLFE. Over 111–125 the chain is Cytoplasmic; the sequence is SSFSMDVHQIKRCMG. Residues 126–146 form a helical membrane-spanning segment; that stretch reads QMVLLAGPGVLISTFCLGALI. Over 147-157 the chain is Extracellular; that stretch reads KLTFPYNWDWK. Residues 158–178 traverse the membrane as a helical segment; the sequence is TSLLLGGLLGATDPVAVVALL. The Cytoplasmic portion of the chain corresponds to 179–194; sequence KELGASKKMTTLIDGE. Residues 195-215 traverse the membrane as a helical segment; sequence SLMNDGVSVVVFQLFFKMVMG. The Extracellular portion of the chain corresponds to 216-225; the sequence is HNSDWGSIIK. Residues 226–248 form a helical membrane-spanning segment; sequence FLVQNSFGAVGIGLAFGIASVFW. The Cytoplasmic segment spans residues 249–251; sequence LKF. Residues 252 to 271 form a helical membrane-spanning segment; that stretch reads IFNDTVAQITVTLSASYFAY. At 272 to 276 the chain is on the extracellular side; the sequence is YTAQE. The helical transmembrane segment at 277–297 threads the bilayer; the sequence is WAGVSGILTVMILGMFFAAFA. Topologically, residues 298–311 are cytoplasmic; that stretch reads RTAFKGDSHQSLHH. A helical membrane pass occupies residues 312–332; that stretch reads FWEMAAYIANTLVFMLSGVII. Residues 333–350 are Extracellular-facing; sequence AESVLSGQTISYKGNSWS. A helical membrane pass occupies residues 351-371; the sequence is FLFLLYLYVQLSRCVVVGVLY. Topologically, residues 372-385 are cytoplasmic; that stretch reads PLLCRSGYGLDWKE. A helical transmembrane segment spans residues 386–406; sequence SIILTWSGLRGAVSLSLALSV. The Extracellular segment spans residues 407-422; sequence KQSSGNSYLSSDTGTR. Residues 423–443 traverse the membrane as a helical segment; that stretch reads FLFLTGGIVFLTLVVNGSTTQ. At 444–756 the chain is on the cytoplasmic side; that stretch reads LLLHLLRMDT…RSLAIGETDA (313 aa).

This sequence belongs to the monovalent cation:proton antiporter 1 (CPA1) transporter (TC 2.A.36) family.

The protein localises to the cell membrane. It carries out the reaction Na(+)(in) + H(+)(out) = Na(+)(out) + H(+)(in). The enzyme catalyses K(+)(in) + H(+)(out) = K(+)(out) + H(+)(in). Its function is as follows. May act in low affinity electroneutral exchange of protons for cations such as Na(+) or K(+) across membranes. May also exchange Li(+) and Cs(+) with a lower affinity. This chain is Sodium/hydrogen exchanger 8 (NHX8), found in Arabidopsis thaliana (Mouse-ear cress).